The sequence spans 613 residues: tRNA (uracil-5-)-methyltransferase homolog A (613 aa).

Residues 1 to 46 are disordered; that stretch reads MSEPAAEVPEPMEDCGQDASAVPSSAAPLCQKEEAGPGPAAGPGTQ. Positions 63-136 constitute an RRM domain; it reads FKLELQNVPR…CPLSVRLARP (74 aa). Residues 170–200 adopt a coiled-coil conformation; sequence YTEQLEQKRLECERVLQKLAKEIGNTNRALL. A Phosphoserine modification is found at S368. Residues Q401, E451, and D500 each coordinate S-adenosyl-L-methionine. Catalysis depends on C528, which acts as the Nucleophile. The Proton acceptor role is filled by E571.

This sequence belongs to the class I-like SAM-binding methyltransferase superfamily. RNA M5U methyltransferase family. In terms of tissue distribution, widely expressed at low level. Expressed at higher level in proliferating cells.

The protein localises to the cytoplasm. The protein resides in the cytosol. It catalyses the reaction uridine(54) in tRNA + S-adenosyl-L-methionine = 5-methyluridine(54) in tRNA + S-adenosyl-L-homocysteine + H(+). The enzyme catalyses a uridine in mRNA + S-adenosyl-L-methionine = a 5-methyluridine in mRNA + S-adenosyl-L-homocysteine + H(+). In terms of biological role, S-adenosyl-L-methionine-dependent methyltransferase that catalyzes the formation of 5-methyl-uridine in tRNAs and some mRNAs. Mainly catalyzes the methylation of uridine at position 54 (m5U54) in cytosolic tRNAs. Also able to mediate the formation of 5-methyl-uridine in some mRNAs. This Mus musculus (Mouse) protein is tRNA (uracil-5-)-methyltransferase homolog A.